We begin with the raw amino-acid sequence, 485 residues long: Taxane 13-alpha-hydroxylase (485 aa).

A heme-binding site is contributed by cysteine 431.

Belongs to the cytochrome P450 family. The cofactor is heme.

The enzyme catalyses taxa-4(20),11-dien-5alpha-ol + reduced [NADPH--hemoprotein reductase] + O2 = taxa-4(20),11-dien-5alpha,13alpha-diol + oxidized [NADPH--hemoprotein reductase] + H2O + H(+). Its pathway is alkaloid biosynthesis; taxol biosynthesis. Functionally, involved in the transformation of a taxadienyl acetate by hydroxylation at C13 to yield taxadien-5-alpha-acetoxy-13-alpha-ol. This is Taxane 13-alpha-hydroxylase (CYP725A2) from Taxus cuspidata (Japanese yew).